The sequence spans 63 residues: Large ribosomal subunit protein bL28 (63 aa).

This sequence belongs to the bacterial ribosomal protein bL28 family.

This Citrifermentans bemidjiense (strain ATCC BAA-1014 / DSM 16622 / JCM 12645 / Bem) (Geobacter bemidjiensis) protein is Large ribosomal subunit protein bL28.